A 209-amino-acid polypeptide reads, in one-letter code: MAETCKMKYTVFHSPLGKIELCGCERGLHGIRFLSGKTPSSDPKEAPASPELLGGPEDLPESLVQCTTWLEAYFQEPAATEGLPLPALHHPVFQQDSFTRQVLWKLLKVVKFGEMVSYQQLAALAGNPKAARAVGGAMRNNPVPILIPCHRVICSNGSIGNYSGGGQAVKEWLLAHEGIPTRQPACKDLGLTGTRLKPSGGSTSSKLSG.

C5 serves as a coordination point for Zn(2+). Residue S14 is modified to Phosphoserine. Residues C24 and H29 each coordinate Zn(2+). The segment at 35 to 57 is disordered; that stretch reads SGKTPSSDPKEAPASPELLGGPE. H89 lines the Zn(2+) pocket. DNA contacts are provided by T99, Y118, Q119, N127, and R132. C149 serves as the catalytic Nucleophile; methyl group acceptor. S155 is a DNA binding site. A Phosphoserine modification is found at S205.

Belongs to the MGMT family. The cofactor is Zn(2+).

It localises to the nucleus. It carries out the reaction a 6-O-methyl-2'-deoxyguanosine in DNA + L-cysteinyl-[protein] = S-methyl-L-cysteinyl-[protein] + a 2'-deoxyguanosine in DNA. The catalysed reaction is a 4-O-methyl-thymidine in DNA + L-cysteinyl-[protein] = a thymidine in DNA + S-methyl-L-cysteinyl-[protein]. Involved in the cellular defense against the biological effects of O6-methylguanine (O6-MeG) and O4-methylthymine (O4-MeT) in DNA. Repairs the methylated nucleobase in DNA by stoichiometrically transferring the methyl group to a cysteine residue in the enzyme. This is a suicide reaction: the enzyme is irreversibly inactivated. This Cricetulus griseus (Chinese hamster) protein is Methylated-DNA--protein-cysteine methyltransferase (MGMT).